The primary structure comprises 951 residues: Valine--tRNA ligase (951 aa).

The short motif at 42-52 (PNVTGSLHMGH) is the 'HIGH' region element. The 'KMSKS' region motif lies at 554 to 558 (KMSKS). ATP is bound at residue Lys-557. Positions 882 to 944 (LINKDDELAR…AEAKAKLIEQ (63 aa)) form a coiled coil.

Belongs to the class-I aminoacyl-tRNA synthetase family. ValS type 1 subfamily. In terms of assembly, monomer.

The protein resides in the cytoplasm. It catalyses the reaction tRNA(Val) + L-valine + ATP = L-valyl-tRNA(Val) + AMP + diphosphate. Functionally, catalyzes the attachment of valine to tRNA(Val). As ValRS can inadvertently accommodate and process structurally similar amino acids such as threonine, to avoid such errors, it has a 'posttransfer' editing activity that hydrolyzes mischarged Thr-tRNA(Val) in a tRNA-dependent manner. In Salmonella choleraesuis (strain SC-B67), this protein is Valine--tRNA ligase.